A 608-amino-acid polypeptide reads, in one-letter code: Serine/threonine-protein kinase BUR1 (608 aa).

Residues 39–346 (YEIIQKLGQG…ALDALNHNYF (308 aa)) form the Protein kinase domain. Residues 45-53 (LGQGTFGVV) and lysine 68 each bind ATP. Aspartate 174 functions as the Proton acceptor in the catalytic mechanism. Disordered regions lie at residues 383 to 419 (HEANKIPKAHFPKGPGEYNNSNNYPRNRNGSFPLALP) and 443 to 571 (YIPK…FDED). Residues 400 to 411 (YNNSNNYPRNRN) show a composition bias toward low complexity. A compositionally biased stretch (basic and acidic residues) spans 471–482 (LRDRSPRREGHI). Residues 487–502 (STTNSNNISSNSSASN) are compositionally biased toward low complexity. Polar residues-rich tracts occupy residues 503–512 (VGGTLSNPTH) and 539–548 (PQSSSRNVSD). Residues 559–571 (EQNESDLTDFDED) show a composition bias toward acidic residues.

The protein belongs to the protein kinase superfamily. CMGC Ser/Thr protein kinase family. CDC2/CDKX subfamily.

Its subcellular location is the nucleus. It carries out the reaction L-seryl-[protein] + ATP = O-phospho-L-seryl-[protein] + ADP + H(+). The catalysed reaction is L-threonyl-[protein] + ATP = O-phospho-L-threonyl-[protein] + ADP + H(+). It catalyses the reaction [DNA-directed RNA polymerase] + ATP = phospho-[DNA-directed RNA polymerase] + ADP + H(+). Its function is as follows. Serine/threonine-protein kinase involved in transcription regulation. Phosphorylates the UBC2/RAD6 ubiquitin-conjugating enzyme (E2), leading to monoubiquitination of histone H2B and the silencing of telomeric-associated genes. Also required for histone H3 methylation. Necessary for the recovery from pheromone-induced growth arrest in the cell cycle G1 phase. The polypeptide is Serine/threonine-protein kinase BUR1 (BUR1) (Debaryomyces hansenii (strain ATCC 36239 / CBS 767 / BCRC 21394 / JCM 1990 / NBRC 0083 / IGC 2968) (Yeast)).